A 166-amino-acid polypeptide reads, in one-letter code: Small ribosomal subunit protein uS5 (166 aa).

One can recognise an S5 DRBM domain in the interval Leu-11 to Val-74.

This sequence belongs to the universal ribosomal protein uS5 family. Part of the 30S ribosomal subunit. Contacts proteins S4 and S8.

Its function is as follows. With S4 and S12 plays an important role in translational accuracy. Located at the back of the 30S subunit body where it stabilizes the conformation of the head with respect to the body. This Aeromonas hydrophila subsp. hydrophila (strain ATCC 7966 / DSM 30187 / BCRC 13018 / CCUG 14551 / JCM 1027 / KCTC 2358 / NCIMB 9240 / NCTC 8049) protein is Small ribosomal subunit protein uS5.